The chain runs to 640 residues: Threonine--tRNA ligase (640 aa).

The 61-residue stretch at 1-61 (MPTITLPDGS…ENDASLQIIT (61 aa)) folds into the TGS domain. Residues 242-533 (DHRKIGKRLG…LIEHYEGAFP (292 aa)) form a catalytic region. Zn(2+) contacts are provided by cysteine 333, histidine 384, and histidine 510.

It belongs to the class-II aminoacyl-tRNA synthetase family. Homodimer. Zn(2+) is required as a cofactor.

It is found in the cytoplasm. The catalysed reaction is tRNA(Thr) + L-threonine + ATP = L-threonyl-tRNA(Thr) + AMP + diphosphate + H(+). In terms of biological role, catalyzes the attachment of threonine to tRNA(Thr) in a two-step reaction: L-threonine is first activated by ATP to form Thr-AMP and then transferred to the acceptor end of tRNA(Thr). Also edits incorrectly charged L-seryl-tRNA(Thr). This Pseudomonas syringae pv. syringae (strain B728a) protein is Threonine--tRNA ligase.